Reading from the N-terminus, the 375-residue chain is uncharacterized protein (375 aa).

Residues 52-301 (VLLSAHRGSW…KQGFATYHES (250 aa)) form the GP-PDE domain.

This is an uncharacterized protein from Sinorhizobium fredii (strain NBRC 101917 / NGR234).